The following is a 439-amino-acid chain: Chromosomal replication initiator protein DnaA (439 aa).

The interval Met-1 to Gly-75 is domain I, interacts with DnaA modulators. Residues Gly-75–Gly-101 form a domain II region. The segment at Asn-102–Ala-319 is domain III, AAA+ region. 4 residues coordinate ATP: Gly-147, Gly-149, Lys-150, and Thr-151. Residues Asn-320–Glu-439 are domain IV, binds dsDNA.

Belongs to the DnaA family. Oligomerizes as a right-handed, spiral filament on DNA at oriC.

It is found in the cytoplasm. Its function is as follows. Plays an essential role in the initiation and regulation of chromosomal replication. ATP-DnaA binds to the origin of replication (oriC) to initiate formation of the DNA replication initiation complex once per cell cycle. Binds the DnaA box (a 9 base pair repeat at the origin) and separates the double-stranded (ds)DNA. Forms a right-handed helical filament on oriC DNA; dsDNA binds to the exterior of the filament while single-stranded (ss)DNA is stabiized in the filament's interior. The ATP-DnaA-oriC complex binds and stabilizes one strand of the AT-rich DNA unwinding element (DUE), permitting loading of DNA polymerase. After initiation quickly degrades to an ADP-DnaA complex that is not apt for DNA replication. Binds acidic phospholipids. The protein is Chromosomal replication initiator protein DnaA of Xylella fastidiosa (strain 9a5c).